Here is a 479-residue protein sequence, read N- to C-terminus: Glycogen synthase (479 aa).

Lysine 15 contacts ADP-alpha-D-glucose.

This sequence belongs to the glycosyltransferase 1 family. Bacterial/plant glycogen synthase subfamily.

The enzyme catalyses [(1-&gt;4)-alpha-D-glucosyl](n) + ADP-alpha-D-glucose = [(1-&gt;4)-alpha-D-glucosyl](n+1) + ADP + H(+). The protein operates within glycan biosynthesis; glycogen biosynthesis. Its function is as follows. Synthesizes alpha-1,4-glucan chains using ADP-glucose. This Histophilus somni (strain 129Pt) (Haemophilus somnus) protein is Glycogen synthase.